Here is a 3184-residue protein sequence, read N- to C-terminus: MEILNLSIEFHIPDGNTLKKMVRVDNTTKIGEMSRLLLDKFGRSDFDPSQFQLIVPQKTATISFHVLSDLNKSLSSYNIKNNDELIFKKRQKKTNPGNAKLVSKKKPESIFKTLFSMSTLEMKLGEDKSAPEISEVENQIDDLGILFKALEILTNSFNQNKDIEDIVSSFQYVGNESEIADLVKIVLSNNDGLSSNSNNNSSSNIGSMLNSGGGGSGSNLGLGLSSGTGGSFNGNSSGSSSSSSYYYNNNNNNNNIELTAQQKNPKVLCSFILHLLQIIFSQTSLTYSLYITYLKTNNNNNNNNNNNSSSPSNTDLSRSTYFYDIPVKSRIILKHIMLFLYNLTQRDASLLDSLSNIIGPFILGNVLLDPPPPPPSNSSPPISKSTSNNNLNVSNYHNNNNNNNNSNSNLSNSGNGDESPDFQSQNLVKSYNRENSGNSLNSMLHQTSLPNNNNSNVVNNNNNNNNNNNNNNNNNNNNNNNNNNNNNNNNNINNNSTSSNNNNNNNSNNNNSQIPPLIQVRQPSSDFTTTSSGNLRSLSNTENSLCKKVAIDLIQNIPLYLLFSHLKIQQLEGEKILFSAENIFCVDKCNFPPNKAMLGEIWVTNFRIIFINSNSNSSTIPNSTSSTSISSFASTQNLSILSIMTLFGSYNGNGGSGPTNATLSGGGSTSSSSNLNTPITTSPIHTSTNSNGAILNPINNSLINSNNNNNNNNINNNINNNINNINNNINNINSNSNNNINSIINSNSNNNNNNNNLNKLSTLDNTEIPLSMIYRWKMVKTGSLYDSFKIYCKDFRCKIIGFQINSHVLVKFKDLLTKCSVPTLDTIFAYNSKESSFGNTECFPDHSLLQEYNRIGVSWDLWRTTTQSKLCEHYPPTSVVPKSVSDNIVVTSAYYRSYGFPVLAWSHPTQKSSITRATSPEDQNNGSSNYLLTPNSPNSSSSNLANNNNSNNNNINNNNNNNNNNNNNNNNNSNNNNNNNNNNNNNNNNNNNNNGGGSGSRSTTIDNGQTSILNKNISNTPLIQSPTPNLPPSQHSLNLLMSPQTSSPRIHQSISSSSIPQVCQEDIDFLRGILDIKSSSMLNVFDTGSGGSYSSTMIGCQIEFLNLPPPNKVRERFNRLLHLHLGNPDSEWSETIRFFWLDPLKPILSAAINIAMHVDQGRSVLIQNSSSGPDIELQLSSLAQILLDPYYRTMDGFKVLIEKEWLSYGYPFSKRCHHKTSDDGFSPIFMQFIFLVWQIWKEFPTHFQFNEYYLLTLLDNVYNSRFGTFLCNNYKERMENNVYSSTKSFWSFQQQNQSRFTNLFYRPSPSSSSSSSSSSSSLSNGYNSSVQHLKCLRVFQDTMWNEYFFRYCFKSSLAIEQFEDRIKLSLLDIEMTVNSAITSTANALLPFLETLDLSNLRLYYLPSESTLYHLVGLRELNLSKNNLNSISCSLSSLVKLEKLSFEENSITNLPIETVVLLAEKLTSLTELNLSSNQLIDLPIEFSMFSKSLKKLHLKNNRFSAIPEVLGMLENLIELDLSELDLSSSTNSGVGIPTKLSKLCILNLNQTRIVELPKEFGDLKSLEKLYLDFNSLVTLPHSFRQLTNLEELSLSFNSMTELPREVCFLINLKKLMIEGNQIQFLPNEISQLSKLMILNVCKNKLDSLPASIGQLSQLVSLNLNNNSQLVSLRPTMGLLSNLVELKLDGTRLKTPPPEIVSLGLKSILLYLKDLIKGQEQCYKMKLMIVGQENVGKTTLLKTLKEKKKKATPSGPNISTDGIAIDQWVFSCLFEELDETSQNGRLIKKKQDITLSIWDFAGQEIYYTTHQFFLSERSVYIVAWNCALAEEESRVEFWLQSITTRAKDAPIIIVGTHLDDVNRTTAKMQKKRMKEKYLIRYQNIKAIKLVSCTSGKGITSLREKLEALVQSQSNMGESLPRSYMLLENLVKEETKKRIIPTIPWTEFIQMGTICTITDEAELLRATMFLHQLGSLVYFPKEPGLKQFVILDPQWITTMLSSIITTKHSYAKDGILNHKSLKQIWRPPQYPTHLHPHLISLLEKFEISYNLSPDSTSFETGTSLIPSLLLNDRPAIFPSLWGSFNQLVRQFGRIYQFEFVPNGFFSRLMVRILNFARVEAKCYWKNGMILQHDEETIFLEMNNAKKSLSFTVRGGANSTTLSRDVIETIQSLLDDSFQLPTYVFVPCFHCIFLSLPQCYYFPLDVCENAAVKGTGYLKCLTYDANVRTDLLVPDLVMSNFTGAKIPFDQLMIEELIGEGGAALVYRARWQGQTVAVKKLKTIENLDSPIEINDISLSKAFNEFRRECWVMSELEHPNIVQLKGLCLDPLCIVTEYLPHGNLYSFLHKPEMEFSWLFRLKVALDISSGMAFLHSSTPPIIHRDLKSPNILLASINENAQTIAKVVDFGLSGLQHTITNRGVENPLWLAPEILNKTKEASTQTDVYAFGVILWELVTRKDYFGEIGFMTLIEEKVINGERPKIPEDCPEMYSKLIVECWQTDASQRPKFSEIEDRLIKIAEAMFPDIHLSNIYQQQQQQQQQQQQSSPSKSSSTSPIIKSLNLSTVSELGESSNQTPKQNITTTTTTTHSDHKRQLSTDSGSSYRNKSHDTISHSTSVASDLLDIDNTLTVATTPRNRSKTNDDNIINTSNGRIITNSINNSNSNNEQPLSPNSLLQHSQSQQQLENVGLSALLDALPNSPIVSSTAAPSTTSTNKKVMYTSIVGDSARTRRGSVSIQPFQNEFNRELLPNQGTIQCLIKVGGNGCQVWAGTGNGFISTWKIEGQEKYIQRLFEANKDKKRIHCLYPYMNTVWCGSADDSITIWDIDTYQKIKSYSVEGPSCITRVGNTMWVGTIVNTIHIYDLKKKTKYKGKISLDSPIECLLRRDQEVWVATLGNIARIDVNSLRVVQMTKAHERAIHAMIQVDDHVWTASSDGTIKVWSSTCQSVHTIENAHSSRIFTLELVGDFVWSGSWDTTIKIWSTKDYHLVSENSGKHKDAISSFVYISNDQPLQTNERPIQKQVWSGSWDSSICVWALPNDTNSRSNTIFSSDSQFNLNGGSSNSITNSNSNSNNNLNGNLNNSNNSINNNYNNNNNNNNNNNNNNNNNNNNNNNNNNNNNNNYYYSNNVNSPNQASQSAGHLGTIHEQTSPNSATPLSSTPPGSKGLMQRRTVSFMNVLERFSNDKNRK.

Over residues 369 to 378 the composition is skewed to pro residues; it reads DPPPPPPSNS. Disordered regions lie at residues 369-516 and 913-1013; these read DPPP…QIPP and SITR…TSIL. Over residues 379–415 the composition is skewed to low complexity; it reads SPPISKSTSNNNLNVSNYHNNNNNNNNSNSNLSNSGN. Residues 421 to 450 are compositionally biased toward polar residues; the sequence is DFQSQNLVKSYNRENSGNSLNSMLHQTSLP. Over residues 451–512 the composition is skewed to low complexity; sequence NNNNSNVVNN…NNNNSNNNNS (62 aa). A Myotubularin phosphatase domain is found at 842-1348; the sequence is CFPDHSLLQE…FQDTMWNEYF (507 aa). Over residues 913–934 the composition is skewed to polar residues; the sequence is SITRATSPEDQNNGSSNYLLTP. Residues 935 to 993 show a composition bias toward low complexity; sequence NSPNSSSSNLANNNNSNNNNINNNNNNNNNNNNNNNNNSNNNNNNNNNNNNNNNNNNNN. Residues 1000 to 1013 show a composition bias toward polar residues; it reads SRSTTIDNGQTSIL. LRR repeat units follow at residues 1391 to 1412, 1416 to 1438, 1439 to 1460, 1467 to 1488, 1491 to 1512, 1514 to 1535, 1541 to 1563, 1564 to 1585, 1587 to 1608, 1610 to 1631, 1633 to 1654, 1656 to 1678, and 1680 to 1701; these read FLET…STLY, GLRE…SSLV, KLEK…TVVL, SLTE…FSMF, SLKK…LGML, NLIE…GVGI, KLCI…GDLK, SLEK…FRQL, NLEE…VCFL, NLKK…ISQL, KLMI…IGQL, QLVS…MGLL, and NLVE…IVSL. Residues 1716-1910 enclose the Roc domain; the sequence is GQEQCYKMKL…EKLEALVQSQ (195 aa). The segment at 1716-1910 is small GTPase-like; the sequence is GQEQCYKMKL…EKLEALVQSQ (195 aa). Residues 1729–1736, 1797–1801, and 1854–1857 each bind GTP; these read GQENVGKT, DFAGQ, and THLD. Residues 1918–2127 enclose the COR domain; that stretch reads PRSYMLLENL…KCYWKNGMIL (210 aa). A Protein kinase domain is found at 2247-2519; the sequence is LMIEELIGEG…RLIKIAEAMF (273 aa). ATP is bound by residues 2253 to 2261 and Lys-2274; that span reads IGEGGAALV. Residue Asp-2379 is the Proton acceptor of the active site. Disordered stretches follow at residues 2528–2609 and 2652–2671; these read YQQQ…TISH and NSIN…NSLL. A compositionally biased stretch (low complexity) spans 2529 to 2555; that stretch reads QQQQQQQQQQQQSSPSKSSSTSPIIKS. Residues 2556–2576 show a composition bias toward polar residues; the sequence is LNLSTVSELGESSNQTPKQNI. 5 WD repeats span residues 2745–2785, 2790–2829, 2909–2947, 2949–2986, and 2990–3040; these read PNQG…KYIQ, ANKD…KIKS, AHER…HTIE, AHSS…LVSE, and KHKD…NSRS. Positions 3055 to 3126 are enriched in low complexity; the sequence is GSSNSITNSN…NYYYSNNVNS (72 aa). The segment at 3055 to 3164 is disordered; the sequence is GSSNSITNSN…TPPGSKGLMQ (110 aa). Over residues 3141-3157 the composition is skewed to polar residues; that stretch reads HEQTSPNSATPLSSTPP.

This sequence belongs to the protein kinase superfamily. TKL Ser/Thr protein kinase family. ROCO subfamily.

It carries out the reaction L-seryl-[protein] + ATP = O-phospho-L-seryl-[protein] + ADP + H(+). It catalyses the reaction L-threonyl-[protein] + ATP = O-phospho-L-threonyl-[protein] + ADP + H(+). In terms of biological role, may act as a serine/threonine-protein kinase and guanine-nucleotide releasing factor. Essential regulator of cytokinesis involved in the binding to actomyosin cytoskeleton. This chain is Probable serine/threonine-protein kinase pats1 (pats1), found in Dictyostelium discoideum (Social amoeba).